The sequence spans 66 residues: Large ribosomal subunit protein bL35 (66 aa).

Residues 1-26 are compositionally biased toward basic residues; sequence MPKMKTHRGAAKRFKKTGTGKLKRGH. Residues 1 to 48 form a disordered region; that stretch reads MPKMKTHRGAAKRFKKTGTGKLKRGHAYTSHLFANKTQKQKRKLRKAT.

This sequence belongs to the bacterial ribosomal protein bL35 family.

The protein is Large ribosomal subunit protein bL35 of Geobacillus sp. (strain WCH70).